The sequence spans 273 residues: Protein FAM210A (273 aa).

A compositionally biased stretch (low complexity) spans 97-106 (SSSATSSGPP). The disordered stretch occupies residues 97–116 (SSSATSSGPPSEKKEDPDPL). A compositionally biased stretch (basic and acidic residues) spans 107–116 (SEKKEDPDPL). Residues 118–230 (DRSISLYQRF…GYMSTPPPVK (113 aa)) form the DUF1279 domain. Residues 137-157 (VLIPVHLITSAVWFGTFYYAA) traverse the membrane as a helical segment. The stretch at 230-269 (KEYLQDKMEETKELLTEKMEETKDRLTEKLQETKGKVSLK) forms a coiled coil. The interval 247–273 (KMEETKDRLTEKLQETKGKVSLKKKVE) is disordered.

Belongs to the FAM210 family. As to quaternary structure, interacts with ATAD3A.

It is found in the membrane. Its subcellular location is the mitochondrion. The protein localises to the cytoplasm. Its function is as follows. May play a role in the structure and strength of both muscle and bone. The sequence is that of Protein FAM210A (FAM210A) from Bos taurus (Bovine).